We begin with the raw amino-acid sequence, 202 residues long: Large ribosomal subunit protein uL5 (202 aa).

The segment covering 1 to 17 (MSAKAATKNATKVAVKA) has biased composition (low complexity). Residues 1 to 30 (MSAKAATKNATKVAVKAPEATTPVETKKSK) are disordered.

The protein belongs to the universal ribosomal protein uL5 family. Component of the large ribosomal subunit.

The protein resides in the nucleus. It localises to the cytoplasm. Functionally, component of the ribosome, a large ribonucleoprotein complex responsible for the synthesis of proteins in the cell. The small ribosomal subunit (SSU) binds messenger RNAs (mRNAs) and translates the encoded message by selecting cognate aminoacyl-transfer RNA (tRNA) molecules. The large subunit (LSU) contains the ribosomal catalytic site termed the peptidyl transferase center (PTC), which catalyzes the formation of peptide bonds, thereby polymerizing the amino acids delivered by tRNAs into a polypeptide chain. The nascent polypeptides leave the ribosome through a tunnel in the LSU and interact with protein factors that function in enzymatic processing, targeting, and the membrane insertion of nascent chains at the exit of the ribosomal tunnel. The protein is Large ribosomal subunit protein uL5 (rpl11) of Dictyostelium discoideum (Social amoeba).